We begin with the raw amino-acid sequence, 862 residues long: Transcription factor E2F7 (862 aa).

2 consecutive DNA-binding regions follow at residues arginine 140–glycine 209 and arginine 279–glycine 364. 3 disordered regions span residues proline 561–leucine 592, threonine 617–glutamate 643, and lysine 788–asparagine 862. The segment covering aspartate 564–serine 574 has biased composition (polar residues). A compositionally biased stretch (basic and acidic residues) spans lysine 575 to alanine 590. Polar residues-rich tracts occupy residues glutamate 633–glutamate 643 and aspartate 832–glutamine 851.

The protein belongs to the E2F/DP family. As to quaternary structure, homodimer and heterodimer: mainly forms homodimers and, to a lesser extent, heterodimers with e2f8.

It localises to the nucleus. Its function is as follows. Atypical E2F transcription factor that participates in various processes such as angiogenesis and polyploidization of specialized cells. Mainly acts as a transcription repressor that binds DNA independently of DP proteins and specifically recognizes the E2 recognition site 5'-TTTC[CG]CGC-3'. Directly represses transcription of classical E2F transcription factors such as e2f1. Acts as a regulator of S-phase by recognizing and binding the E2-related site 5'-TTCCCGCC-3' and mediating repression of G1/S-regulated genes. Acts as a promoter of sprouting angiogenesis, possibly by acting as a transcription activator. The protein is Transcription factor E2F7 (e2f7) of Xenopus tropicalis (Western clawed frog).